A 269-amino-acid chain; its full sequence is Myelin protein zero-like protein 1 (269 aa).

Positions 1-35 (MAAPAGAGALIASPDRRRCLWSVLAAALGLLTYGV) are cleaved as a signal peptide. Residues 36-146 (SALEVYTPKE…VKNPPDIVVQ (111 aa)) form the Ig-like V-type domain. Over 36–162 (SALEVYTPKE…YVVEKEILPA (127 aa)) the chain is Extracellular. Residues N50, N64, and N130 are each glycosylated (N-linked (GlcNAc...) asparagine). C58 and C135 are disulfide-bonded. Residues 163-183 (FPVWVVVGIVTAVVLGLTLLI) traverse the membrane as a helical segment. Residues 184–269 (TMILAVIYRR…SVVYADIRKN (86 aa)) are Cytoplasmic-facing. The tract at residues 202-238 (GCNTSENVSPVKQVSRKSPSDTEGLVKSLPSGSHQGP) is disordered. Residues 203–213 (CNTSENVSPVK) show a composition bias toward polar residues. S206, S210, S219, and S221 each carry phosphoserine. Residues 239–244 (VIYAQL) carry the ITIM motif 1 motif. A Phosphotyrosine modification is found at Y241. The residue at position 260 (S260) is a Phosphoserine. The ITIM motif 2 signature appears at 261–266 (VVYADI). Y263 bears the Phosphotyrosine mark.

Belongs to the myelin P0 protein family. As to quaternary structure, interacts with phosphorylated PTPN11/SHP-2. In terms of processing, phosphorylated on tyrosine residues upon stimulation with pervanadate and concanavalin-A (ConA). Phosphorylation at Tyr-241 and Tyr-263 is required for interaction with PTPN11/SHP-2. Dephosphorylated by PTPN11/SHP-2 (in vitro). N-glycosylated.

The protein resides in the membrane. Cell surface receptor, which is involved in signal transduction processes. Recruits PTPN11/SHP-2 to the cell membrane and is a putative substrate of PTPN11/SHP-2. Is a major receptor for concanavalin-A (ConA) and is involved in cellular signaling induced by ConA, which probably includes Src family tyrosine-protein kinases. May be involved in regulation of integrin-mediated cell motility. The protein is Myelin protein zero-like protein 1 (MPZL1) of Bos taurus (Bovine).